Consider the following 199-residue polypeptide: Large ribosomal subunit protein bL9 (199 aa).

Residues lysine 153 to asparagine 199 form a disordered region.

It belongs to the bacterial ribosomal protein bL9 family.

Binds to the 23S rRNA. The sequence is that of Large ribosomal subunit protein bL9 from Treponema denticola (strain ATCC 35405 / DSM 14222 / CIP 103919 / JCM 8153 / KCTC 15104).